Here is a 131-residue protein sequence, read N- to C-terminus: Snaclec macrovipecetin subunit alpha (131 aa).

Intrachain disulfides connect C2-C13, C30-C125, and C100-C117. The C-type lectin domain maps to 9-126; sequence HEEHCYKVFR…CEDKNPFICK (118 aa).

As to quaternary structure, heterodimer of subunits alpha and beta; disulfide-linked. In terms of tissue distribution, expressed by the venom gland.

The protein localises to the secreted. Functionally, interferes with one step of hemostasis (modulation of platelet aggregation, or coagulation cascade, for example). The chain is Snaclec macrovipecetin subunit alpha from Macrovipera lebetinus (Levantine viper).